The primary structure comprises 217 residues: Small ribosomal subunit protein uS3 (217 aa).

In terms of domain architecture, KH type-2 spans 38 to 106 (IRQLIQTKLA…QVHINIVEIK (69 aa)).

This sequence belongs to the universal ribosomal protein uS3 family. In terms of assembly, part of the 30S ribosomal subunit. Forms a tight complex with proteins S10 and S14.

Binds the lower part of the 30S subunit head. Binds mRNA in the 70S ribosome, positioning it for translation. The chain is Small ribosomal subunit protein uS3 from Lactococcus lactis subsp. cremoris (strain MG1363).